A 162-amino-acid chain; its full sequence is Interleukin-15 (162 aa).

An N-terminal signal peptide occupies residues 1–29 (MKILKPYMRNTSISCYLCFLLNSHFLTEA). Positions 30–48 (GIHVFILGCVSVGLPKTEA) are excised as a propeptide. Disulfide bonds link cysteine 83-cysteine 133 and cysteine 90-cysteine 136. N-linked (GlcNAc...) asparagine glycosylation is found at asparagine 104, asparagine 108, and asparagine 119.

The protein belongs to the IL-15/IL-21 family.

It is found in the secreted. Its function is as follows. Cytokine that plays a major role in the development of inflammatory and protective immune responses to microbial invaders and parasites by modulating immune cells of both the innate and adaptive immune systems. Stimulates the proliferation and activation of natural killer cells, T-cells and B-cells and promotes the secretion of several cytokines. In monocytes, induces the production of IL8 and monocyte chemotactic protein 1/CCL2, two chemokines that attract neutrophils and monocytes respectively to sites of infection. Unlike most cytokines, which are secreted in soluble form, IL15 is expressed in association with its high affinity IL15RA on the surface of IL15-producing cells and delivers signals to target cells that express IL2RB and IL2RG receptor subunits. Binding to its receptor triggers the phosphorylation of JAK1 and JAK3 and the recruitment and subsequent phosphorylation of signal transducer and activator of transcription-3/STAT3 and STAT5. In mast cells, induces the rapid tyrosine phosphorylation of STAT6 and thereby controls mast cell survival and release of cytokines such as IL4. This is Interleukin-15 (Il15) from Mus musculus (Mouse).